The following is a 454-amino-acid chain: Glutamyl-tRNA reductase (454 aa).

Substrate is bound by residues 50 to 53 (TCNR), Ser103, 108 to 110 (EDQ), and Gln114. The active-site Nucleophile is the Cys51. 182–187 (GAGEMG) serves as a coordination point for NADP(+). The segment at 407–454 (LFDPNFGGDTPQPDRPDDIPRAAERGDISGDDLPDDVPNHIAEKVSDG) is disordered. Composition is skewed to basic and acidic residues over residues 418-434 (QPDR…RGDI) and 443-454 (VPNHIAEKVSDG).

The protein belongs to the glutamyl-tRNA reductase family. Homodimer.

The enzyme catalyses (S)-4-amino-5-oxopentanoate + tRNA(Glu) + NADP(+) = L-glutamyl-tRNA(Glu) + NADPH + H(+). The protein operates within porphyrin-containing compound metabolism; protoporphyrin-IX biosynthesis; 5-aminolevulinate from L-glutamyl-tRNA(Glu): step 1/2. Catalyzes the NADPH-dependent reduction of glutamyl-tRNA(Glu) to glutamate 1-semialdehyde (GSA). The chain is Glutamyl-tRNA reductase from Haloquadratum walsbyi (strain DSM 16790 / HBSQ001).